The primary structure comprises 490 residues: Pre-glycoprotein polyprotein GP complex (490 aa).

A lipid anchor (N-myristoyl glycine; by host) is attached at Gly2. The Extracellular portion of the chain corresponds to 2–17 (GQIVTFFQEVPHVIEE). The chain crosses the membrane as a helical span at residues 18–33 (VMNIVLIALSILAILK). Topologically, residues 34–58 (GLYNVATCGLIGLVTFLLLSGRSCS) are cytoplasmic. A Zn(2+)-binding site is contributed by Cys57. Over 59–431 (LIYKGTYELQ…QGKTPLGLVD (373 aa)) the chain is Extracellular. Asn78, Asn88, Asn98, Asn108, Asn118, and Asn166 each carry an N-linked (GlcNAc...) asparagine; by host glycan. 6 disulfide bridges follow: Cys85–Cys230, Cys117–Cys154, Cys179–Cys211, Cys278–Cys291, Cys300–Cys309, and Cys363–Cys384. A glycan (N-linked (GlcNAc...) asparagine; by host) is linked at Asn223. N-linked (GlcNAc...) asparagine; by host glycans are attached at residues Asn364, Asn372, Asn389, and Asn394. A helical transmembrane segment spans residues 432-452 (LFVFSTSFYLISIFLHLVKIP). The Cytoplasmic portion of the chain corresponds to 453–490 (THRHIVGKPCPKPHRLNHMGICSCGLYKQPGVPVRWKR). Residues His454, His456, Cys462, His466, Cys474, and Cys476 each coordinate Zn(2+).

The protein belongs to the arenaviridae GPC protein family. In terms of assembly, interacts with glycoprotein G2. Part of the GP complex (GP-C) together with glycoprotein G1 and glycoprotein G2. The GP-complex interacts with protein Z, which interacts with ribonucleocapsid; these interactions may induce virion budding. As to quaternary structure, homotrimer; disulfide-linked. In pre-fusion state, G1 homotrimers bind G2 homotrimers via ionic interactions. Part of the GP complex (GP-C) together with glycoprotein G2 and the stable signal peptide. Interacts with the primary host receptor DAG1 on the cell surface; this interaction occurs at pH 8.0 but not at pH 6.0 and below. Upon virus internalization and at endosomal pH, interacts with the host lysosomal protein LAMP1; this interaction mediates G1 dissociation from GP-C and membrane fusion. The GP-complex interacts with protein Z, which interacts with ribonucleocapsid; these interactions may induce virion budding. Homotrimer. Interacts with the stable signal peptide. In pre-fusion state, G2 homotrimers bind G1 homotrimers via ionic interactions. Part of the GP complex (GP-C) together with glycoprotein G1 and the stable signal peptide. Acidification in the endosome triggers rearrangements, which ultimately leads to a 6 helix bundle formed by the two heptad repeat domains (HR1 and HR2) in post-fusion state. The GP-complex interacts with protein Z, which interacts with ribonucleocapsid; these interactions may induce virion budding. Post-translationally, specific enzymatic cleavages in vivo yield mature proteins. GP-C polyprotein is cleaved in the endoplasmic reticulum by the host protease MBTPS1. Only cleaved glycoprotein is incorporated into virions. The SSP remains stably associated with the GP complex following cleavage by signal peptidase and plays crucial roles in the trafficking of GP through the secretory pathway. In terms of processing, myristoylation is necessary for GP2-mediated fusion activity.

It is found in the virion membrane. The protein resides in the host endoplasmic reticulum membrane. The protein localises to the host Golgi apparatus membrane. It localises to the host cell membrane. Its function is as follows. Functions as a cleaved signal peptide that is retained as the third component of the GP complex (GP-C). Helps to stabilize the spike complex in its native conformation. The SSP is required for efficient glycoprotein expression, post-translational maturation cleavage of G1 and G2, glycoprotein transport to the cell surface plasma membrane, formation of infectious virus particles, and acid pH-dependent glycoprotein-mediated cell fusion. In terms of biological role, forms the virion spikes together with glycoprotein G2. The glycoprotein spike trimers are connected to the underlying matrix. Interacts with the host receptor. Mediates virus attachment to the host primary receptor alpha-dystroglycan DAG1 (alpha-DG) at the cell surface. This attachment induces virion internalization apparently through macropinocytosis. Following endocytosis, there is a pH-dependent switch from binding DAG1 to the host lysosomal receptor LAMP1. This latter binding triggers the dissociation of GP1, exposing the fusion subunit, GP2, such that fusion can occur. Down-modulates host DAG1. Forms the virion spikes together with glycoprotein G1. The glycoprotein spike trimers are connected to the underlying matrix. Class I viral fusion protein that directs fusion of viral and host endosomal membranes, leading to delivery of the nucleocapsid into the cytoplasm. Membrane fusion is mediated by irreversible conformational changes induced by acidification. The polypeptide is Pre-glycoprotein polyprotein GP complex (Lassa virus (strain GA391) (LASV)).